Here is a 1442-residue protein sequence, read N- to C-terminus: MSFAAYKMMHWPTGVENCASGYITHSLSDSTLQIPIVSVHDDIEAEWPNPKRGIGPLPNVVITAANILEVYIVRAQEEGNTQELRNPKLAKRGGVMDGVYGVSLELVCHYRLHGNVESIAVLPMGGGNSSKGRDSIILTFRDAKISVLEFDDSIHSLRMTSMHCFEGPDWLHLKRGRESFPRGPLVKVDPQGRCGGVLVYGLQMIILKTSQVGSGLVGDDDAFSSGGTVSARVESSYIINLRDLEMKHVKDFVFLHGYIEPVIVILQEEEHTWAGRVSWKHHTCVLSALSINSTLKQHPVIWSAINLPHDAYKLLAVPSPIGGVLVLCANTIHYHSQSASCALALNNYASSADSSQELPASNFSVELDAAHGTWISNDVALLSTKSGELLLLTLIYDGRAVQRLDLSKSKASVLASDITSVGNSLFFLGSRLGDSLLVQFSCRSGPAASLPGLRDEDEDIEGEGHQAKRLRMTSDTFQDTIGNEELSLFGSTPNNSDSAQKSFSFAVRDSLVNVGPVKDFAYGLRINADANATGVSKQSNYELVCCSGHGKNGALCVLRQSIRPEMITEVELPGCKGIWTVYHKSSRGHNADSSKMAADEDEYHAYLIISLEARTMVLETADLLTEVTESVDYYVQGRTIAAGNLFGRRRVIQVFEHGARILDGSFMNQELSFGASNSESNSGSESSTVSSVSIADPYVLLRMTDDSIRLLVGDPSTCTVSISSPSVLEGSKRKISACTLYHDKGPEPWLRKASTDAWLSSGVGEAVDSVDGGPQDQGDIYCVVCYESGALEIFDVPSFNCVFSVDKFASGRRHLSDMPIHELEYELNKNSEDNTSSKEIKNTRVVELAMQRWSGHHTRPFLFAVLADGTILCYHAYLFDGVDSTKAENSLSSENPAALNSSGSSKLRNLKFLRIPLDTSTREGTSDGVASQRITMFKNISGHQGFFLSGSRPGWCMLFRERLRFHSQLCDGSIAAFTVLHNVNCNHGFIYVTAQGVLKICQLPSASIYDNYWPVQKIPLKATPHQVTYYAEKNLYPLIVSYPVSKPLNQVLSSLVDQEAGQQLDNHNMSSDDLQRTYTVEEFEIQILEPERSGGPWETKAKIPMQTSEHALTVRVVTLLNASTGENETLLAVGTAYVQGEDVAARGRVLLFSFGKNGDNSQNVVTEVYSRELKGAISAVASIQGHLLISSGPKIILHKWNGTELNGVAFFDAPPLYVVSMNVVKSFILLGDVHKSIYFLSWKEQGSQLSLLAKDFESLDCFATEFLIDGSTLSLAVSDEQKNIQVFYYAPKMIESWKGLKLLSRAEFHVGAHVSKFLRLQMVSSGADKINRFALLFGTLDGSFGCIAPLDEVTFRRLQSLQKKLVDAVPHVAGLNPLAFRQFRSSGKARRSGPDSIVDCELLCHYEMLPLEEQLELAHQIGTTRYSILKDLVDLSVGTSFL.

Belongs to the CPSF1 family. As to quaternary structure, component of the CPSF complex, at least composed of CPSF160, CPSF100, CPSF73-I, CPSF73-II, CPSF30, FY and FIPS5. Forms a complex with cleavage and polyadenylation specificity factor (CPSF) subunits FY, CPSF30, CPSF73-I, CPSF 73-II and CPSF100.

Its subcellular location is the nucleus. CPSF plays a key role in pre-mRNA 3'-end formation, recognizing the AAUAAA signal sequence and interacting with poly(A)polymerase and other factors to bring about cleavage and poly(A) addition. This subunit is involved in the RNA recognition step of the polyadenylation reaction. The chain is Cleavage and polyadenylation specificity factor subunit 1 (CPSF160) from Arabidopsis thaliana (Mouse-ear cress).